Consider the following 232-residue polypeptide: Small ribosomal subunit protein uS3 (232 aa).

Positions 39-107 constitute a KH type-2 domain; sequence IRAILHKELK…DVVINIVEIR (69 aa).

Belongs to the universal ribosomal protein uS3 family. As to quaternary structure, part of the 30S ribosomal subunit. Forms a tight complex with proteins S10 and S14.

In terms of biological role, binds the lower part of the 30S subunit head. Binds mRNA in the 70S ribosome, positioning it for translation. This is Small ribosomal subunit protein uS3 from Rhodopseudomonas palustris (strain BisA53).